Consider the following 345-residue polypeptide: Isocitrate/homoisocitrate dehydrogenase (345 aa).

69–71 (TTT) lines the NADH pocket. Positions 86, 96, 111, 118, 163, and 165 each coordinate (2R,3S)-homoisocitrate. Position 165 (Asn-165) interacts with NADH. Asp-194, Asp-218, and Asp-222 together coordinate Mg(2+). Residues 251–255 (GSAPD) and Asn-263 contribute to the NADH site.

It belongs to the isocitrate and isopropylmalate dehydrogenases family. The cofactor is Mn(2+). It depends on Mg(2+) as a cofactor.

It catalyses the reaction D-threo-isocitrate + NAD(+) = 2-oxoglutarate + CO2 + NADH. It carries out the reaction (2R,3S)-homoisocitrate + NAD(+) = 2-oxoadipate + CO2 + NADH. It participates in amino-acid biosynthesis; L-lysine biosynthesis via AAA pathway; L-alpha-aminoadipate from 2-oxoglutarate: step 4/5. Its function is as follows. Catalyzes the NAD(+)-dependent oxidative decarboxylation of homoisocitrate to 2-oxoadipate (alpha-ketoadipate), and of isocitrate to 2-oxoglutarate, at near equal efficiency. May thus play a dual role in glutamate and lysine biosynthesis in vivo. Preferentially uses NAD over NADP. This chain is Isocitrate/homoisocitrate dehydrogenase, found in Pyrococcus horikoshii (strain ATCC 700860 / DSM 12428 / JCM 9974 / NBRC 100139 / OT-3).